Reading from the N-terminus, the 397-residue chain is Protein irld-34 (397 aa).

This is Protein irld-34 from Caenorhabditis elegans.